The chain runs to 69 residues: Large ribosomal subunit protein uL29 (69 aa).

It belongs to the universal ribosomal protein uL29 family.

This chain is Large ribosomal subunit protein uL29, found in Oenococcus oeni (strain ATCC BAA-331 / PSU-1).